The chain runs to 140 residues: Putative nickel-responsive regulator (140 aa).

The Ni(2+) site is built by H81, H92, H94, and C100.

It belongs to the transcriptional regulatory CopG/NikR family. Ni(2+) is required as a cofactor.

In terms of biological role, transcriptional regulator. This is Putative nickel-responsive regulator from Methanothrix thermoacetophila (strain DSM 6194 / JCM 14653 / NBRC 101360 / PT) (Methanosaeta thermophila).